The following is a 71-amino-acid chain: ATP synthase subunit c (71 aa).

The next 2 membrane-spanning stretches (helical) occupy residues 4-24 (AVIGAGIAVLTGLGAGIGIGI) and 48-68 (IIGAGLAEATAIYGLIIAFMI).

Belongs to the ATPase C chain family. F-type ATPases have 2 components, F(1) - the catalytic core - and F(0) - the membrane proton channel. F(1) has five subunits: alpha(3), beta(3), gamma(1), delta(1), epsilon(1). F(0) has three main subunits: a(1), b(2) and c(10-14). The alpha and beta chains form an alternating ring which encloses part of the gamma chain. F(1) is attached to F(0) by a central stalk formed by the gamma and epsilon chains, while a peripheral stalk is formed by the delta and b chains.

It localises to the cell membrane. In terms of biological role, f(1)F(0) ATP synthase produces ATP from ADP in the presence of a proton or sodium gradient. F-type ATPases consist of two structural domains, F(1) containing the extramembraneous catalytic core and F(0) containing the membrane proton channel, linked together by a central stalk and a peripheral stalk. During catalysis, ATP synthesis in the catalytic domain of F(1) is coupled via a rotary mechanism of the central stalk subunits to proton translocation. Functionally, key component of the F(0) channel; it plays a direct role in translocation across the membrane. A homomeric c-ring of between 10-14 subunits forms the central stalk rotor element with the F(1) delta and epsilon subunits. This chain is ATP synthase subunit c, found in Clostridium botulinum (strain Alaska E43 / Type E3).